The sequence spans 919 residues: MGRSNSRSHSSRSKSRSQSSSRSRSRSHSRKKRYSSRSRSRTYSRSRSRDRIYSRDYRRDYRNNRGMRRPYGYRGRGRGYYQGGGGRYHRGGYRPVWNRRHSRSPRRGRSRSRSPKRRSVSSQRSRSRSRRSYRSSRSPRSSSSRSSSPYSKSPVSKRRGSQEKQTKKAEGEPQEESPLKSKSQEEPKDTFEHDPSESIDEFNKSATSGDIWPGLSAYDNSPRSPHSPSPIATPPSQSSSCSDAPMLSTVHSAKNTPSQHSHSIQHSPERSGSGSVGNGSSRYSPSQNSPIHHIPSRRSPAKTITPQNAPREESRGRSSFYPEGDQETAKTGKFLKRFTDEESRVFLLDRGNIRDKEAPKEKGSEKGRADGDWDDQEVLDYFSDKESAKQKFHDSEGDDTEETEDYRQFRKSVLADQGKSFATSSHRNTEEEGPKYKSKVSLKGNRESDGFREEKNYKLKETAYIVERPSTAKDKHKEEDKGSDRITVKKEVQSPEQVKSEKLKELFDYSPPLHKSLDAREKSIFREESPLRIKMIASDSHRPEVKLKMAPVPLDDSNRPASLTKDRLLASTLVHSVKKEQEFRSIFDHIKLPQANKSTSESFIQHIVSLVHHVKEQYFKSPAVTLNERFTSYQKATEEHSTRQKSPEIHRRIDISPSALRKHTRLAGEERGFKEEIQKGDKKLRCDSADLRHDIDRRRKERSKERGDSKGSRESSGSRKQEKTPKDYKEYKPYKDDSKHKGRERDHSRSSSSSASPSSPSSREEKESKKEREEEFKTHHEMKDYSGFAGVSRPRGTFFRIRGRGRARGVFAGTNTGPNNSNTTFQKRPKEEEWDPEYTPKSKKYFLHDDRDDGVDYWAKRGRGRGTFQRGRGRFNFKKSGSSPKWTHDKYQGDGIVEDDEETMENNEEKKDRRKEEKE.

The tract at residues 1 to 454 (MGRSNSRSHS…NRESDGFREE (454 aa)) is disordered. A compositionally biased stretch (basic residues) spans 23 to 46 (SRSRSHSRKKRYSSRSRSRTYSRS). Residues 47–63 (RSRDRIYSRDYRRDYRN) are compositionally biased toward basic and acidic residues. Basic residues predominate over residues 87–134 (RYHRGGYRPVWNRRHSRSPRRGRSRSRSPKRRSVSSQRSRSRSRRSYR). 2 positions are modified to phosphoserine: Ser-102 and Ser-104. Residues 135 to 154 (SSRSPRSSSSRSSSPYSKSP) are compositionally biased toward low complexity. An N6-acetyllysine modification is found at Lys-152. Over residues 160-196 (GSQEKQTKKAEGEPQEESPLKSKSQEEPKDTFEHDPS) the composition is skewed to basic and acidic residues. Residues Ser-177 and Ser-181 each carry the phosphoserine modification. Lys-188 participates in a covalent cross-link: Glycyl lysine isopeptide (Lys-Gly) (interchain with G-Cter in SUMO2). Residues Ser-196 and Ser-198 each carry the phosphoserine modification. Tyr-218 is modified (phosphotyrosine). Phosphoserine is present on residues Ser-221, Ser-258, Ser-261, Ser-263, and Ser-267. Tyr-283 bears the Phosphotyrosine mark. Phosphoserine occurs at positions 284, 289, 296, and 299. Thr-305 is modified (phosphothreonine). Ser-314 is subject to Phosphoserine. Lys-330 bears the N6-acetyllysine; alternate mark. Lys-330 is covalently cross-linked (Glycyl lysine isopeptide (Lys-Gly) (interchain with G-Cter in SUMO2); alternate). Thr-339 carries the post-translational modification Phosphothreonine. Basic and acidic residues predominate over residues 351-371 (GNIRDKEAPKEKGSEKGRADG). Tyr-381 carries the post-translational modification Phosphotyrosine. Residues 382 to 395 (FSDKESAKQKFHDS) are compositionally biased toward basic and acidic residues. Phosphoserine occurs at positions 383, 387, and 395. Thr-400 carries the phosphothreonine modification. A Glycyl lysine isopeptide (Lys-Gly) (interchain with G-Cter in SUMO2) cross-link involves residue Lys-411. At Lys-419 the chain carries N6-acetyllysine; alternate. A Glycyl lysine isopeptide (Lys-Gly) (interchain with G-Cter in SUMO2); alternate cross-link involves residue Lys-419. A phosphoserine mark is found at Ser-420 and Ser-425. The residue at position 429 (Thr-429) is a Phosphothreonine. At Lys-435 the chain carries N6-acetyllysine; alternate. Residue Lys-435 forms a Glycyl lysine isopeptide (Lys-Gly) (interchain with G-Cter in SUMO2); alternate linkage. The segment covering 444 to 454 (GNRESDGFREE) has biased composition (basic and acidic residues). A Phosphoserine modification is found at Ser-448. Glycyl lysine isopeptide (Lys-Gly) (interchain with G-Cter in SUMO2) cross-links involve residues Lys-455 and Lys-460. The disordered stretch occupies residues 468-499 (RPSTAKDKHKEEDKGSDRITVKKEVQSPEQVK). At Ser-470 the chain carries Phosphoserine. Residues 470-499 (STAKDKHKEEDKGSDRITVKKEVQSPEQVK) show a composition bias toward basic and acidic residues. Lys-473 is subject to N6-acetyllysine. Residues Lys-489 and Lys-490 each participate in a glycyl lysine isopeptide (Lys-Gly) (interchain with G-Cter in SUMO2) cross-link. Position 494 is a phosphoserine (Ser-494). Lys-499 is covalently cross-linked (Glycyl lysine isopeptide (Lys-Gly) (interchain with G-Cter in SUMO2)). Phosphoserine occurs at positions 500, 510, 523, and 529. Residues Lys-534, Lys-546, and Lys-548 each participate in a glycyl lysine isopeptide (Lys-Gly) (interchain with G-Cter in SUMO2) cross-link. Residues Ser-557 and Ser-562 each carry the phosphoserine modification. Thr-564 bears the Phosphothreonine mark. Lys-565 participates in a covalent cross-link: Glycyl lysine isopeptide (Lys-Gly) (interchain with G-Cter in SUMO2). Ser-576 carries the post-translational modification Phosphoserine. Lys-578 participates in a covalent cross-link: Glycyl lysine isopeptide (Lys-Gly) (interchain with G-Cter in SUMO2); alternate. Residue Lys-578 forms a Glycyl lysine isopeptide (Lys-Gly) (interchain with G-Cter in SUMO1); alternate linkage. Glycyl lysine isopeptide (Lys-Gly) (interchain with G-Cter in SUMO2) cross-links involve residues Lys-591, Lys-597, and Lys-620. 3 positions are modified to phosphoserine: Ser-646, Ser-656, and Ser-658. Basic and acidic residues predominate over residues 670 to 749 (ERGFKEEIQK…HKGRERDHSR (80 aa)). Residues 670–793 (ERGFKEEIQK…DYSGFAGVSR (124 aa)) are disordered. Residue Lys-674 forms a Glycyl lysine isopeptide (Lys-Gly) (interchain with G-Cter in SUMO2) linkage. A phosphoserine mark is found at Ser-688 and Ser-759. The span at 750-761 (SSSSSASPSSPS) shows a compositional bias: low complexity. The segment covering 762–784 (SREEKESKKEREEEFKTHHEMKD) has biased composition (basic and acidic residues). Glycyl lysine isopeptide (Lys-Gly) (interchain with G-Cter in SUMO2) cross-links involve residues Lys-777 and Lys-783. Citrulline is present on Arg-802. Omega-N-methylarginine is present on Arg-808. Residues 809–824 (GVFAGTNTGPNNSNTT) are compositionally biased toward low complexity. 2 disordered regions span residues 809 to 839 (GVFA…PEYT) and 861 to 919 (RGRG…EEKE). Lys-830 is covalently cross-linked (Glycyl lysine isopeptide (Lys-Gly) (interchain with G-Cter in SUMO2); alternate). Lys-830 is covalently cross-linked (Glycyl lysine isopeptide (Lys-Gly) (interchain with G-Cter in SUMO1); alternate). A compositionally biased stretch (acidic residues) spans 896 to 906 (IVEDDEETMEN). Over residues 907-919 (NEEKKDRRKEEKE) the composition is skewed to basic and acidic residues. Lys-910 is covalently cross-linked (Glycyl lysine isopeptide (Lys-Gly) (interchain with G-Cter in SUMO2)).

Belongs to the BCLAF1/THRAP3 family. In terms of assembly, interacts with Bcl-2 related proteins, EMD, with the adenovirus E1B 19 kDa protein and with DNA. Component of the SNARP complex which consists at least of SNIP1, SNW1, THRAP3, BCLAF1 and PNN. Component of a MACOM-like complex, named WTAP complex, composed of WTAP, ZC3H13, CBLL1, KIAA1429, RBM15, BCLAF1 and THRAP3. Citrullinated by PADI4.

It is found in the cytoplasm. The protein localises to the nucleus. It localises to the nucleus speckle. The protein resides in the nucleoplasm. In terms of biological role, death-promoting transcriptional repressor. May be involved in cyclin-D1/CCND1 mRNA stability through the SNARP complex which associates with both the 3'end of the CCND1 gene and its mRNA. The protein is Bcl-2-associated transcription factor 1 (Bclaf1) of Mus musculus (Mouse).